The following is a 113-amino-acid chain: Large ribosomal subunit protein uL22 (113 aa).

This sequence belongs to the universal ribosomal protein uL22 family. In terms of assembly, part of the 50S ribosomal subunit.

Its function is as follows. This protein binds specifically to 23S rRNA; its binding is stimulated by other ribosomal proteins, e.g. L4, L17, and L20. It is important during the early stages of 50S assembly. It makes multiple contacts with different domains of the 23S rRNA in the assembled 50S subunit and ribosome. Functionally, the globular domain of the protein is located near the polypeptide exit tunnel on the outside of the subunit, while an extended beta-hairpin is found that lines the wall of the exit tunnel in the center of the 70S ribosome. The chain is Large ribosomal subunit protein uL22 from Stenotrophomonas maltophilia (strain K279a).